Consider the following 112-residue polypeptide: UPF0342 protein SUB0718 (112 aa).

Belongs to the UPF0342 family.

The polypeptide is UPF0342 protein SUB0718 (Streptococcus uberis (strain ATCC BAA-854 / 0140J)).